The primary structure comprises 2286 residues: DNA polymerase epsilon catalytic subunit A (2286 aa).

A disordered region spans residues M1–S30. Residues R9–G24 are compositionally biased toward basic and acidic residues. 4 positions are modified to phosphoserine: S1184, S1297, S1317, and S1940. Residues D1939–E1969 are disordered. Acidic residues predominate over residues A1946 to E1969. Zn(2+) contacts are provided by C2158, C2161, C2187, and C2190. Residues C2158–C2190 form a CysA-type zinc finger. Positions 2221, 2224, 2236, and 2238 each coordinate [4Fe-4S] cluster. The CysB motif motif lies at C2221–C2238.

This sequence belongs to the DNA polymerase type-B family. Component of the DNA polymerase epsilon complex consisting of four subunits: the catalytic subunit POLE and the accessory subunits POLE2, POLE3 and POLE4. Interacts with RAD17 and TOPBP1.

It localises to the nucleus. The enzyme catalyses DNA(n) + a 2'-deoxyribonucleoside 5'-triphosphate = DNA(n+1) + diphosphate. Catalytic component of the DNA polymerase epsilon complex. Participates in chromosomal DNA replication. Required during synthesis of the leading DNA strands at the replication fork, binds at/or near replication origins and moves along DNA with the replication fork. Has 3'-5' proofreading exonuclease activity that corrects errors arising during DNA replication. Involved in DNA synthesis during DNA repair. Along with DNA polymerase POLD1 and DNA polymerase POLK, has a role in excision repair (NER) synthesis following UV irradiation. This Homo sapiens (Human) protein is DNA polymerase epsilon catalytic subunit A.